Here is a 466-residue protein sequence, read N- to C-terminus: Cysteine--tRNA ligase (466 aa).

Cys28 contributes to the Zn(2+) binding site. The 'HIGH' region signature appears at 30–40 (PTVYNFFHIGN). Zn(2+) is bound by residues Cys208, His233, and Glu237. The short motif at 265-269 (KMSKS) is the 'KMSKS' region element. Lys268 contributes to the ATP binding site.

Belongs to the class-I aminoacyl-tRNA synthetase family. As to quaternary structure, monomer. Requires Zn(2+) as cofactor.

The protein localises to the cytoplasm. It carries out the reaction tRNA(Cys) + L-cysteine + ATP = L-cysteinyl-tRNA(Cys) + AMP + diphosphate. In Clostridium perfringens (strain ATCC 13124 / DSM 756 / JCM 1290 / NCIMB 6125 / NCTC 8237 / Type A), this protein is Cysteine--tRNA ligase.